Consider the following 1138-residue polypeptide: Mastermind-like protein 3 (1138 aa).

Polar residues predominate over residues 37–48; that stretch reads PNSTPAAPSSNH. Disordered stretches follow at residues 37–68, 119–148, 169–188, 207–237, 334–480, and 503–547; these read PNST…AAVP, EQRA…ASAE, RSPL…FSPT, PSNM…THTP, EEKK…QRAK, and QQQQ…PQAF. Residues 52–64 are compositionally biased toward gly residues; it reads GGCGGSGGPGGGS. Composition is skewed to polar residues over residues 130–139 and 173–188; these read GKQQHPSKPQ and NGDQ…FSPT. Composition is skewed to polar residues over residues 343–359 and 372–394; these read QPAT…SVKS and GSPQ…ATSL. Residues 395–411 are compositionally biased toward low complexity; that stretch reads PSVASTPAAPNPASSPA. Positions 414–426 are enriched in polar residues; sequence AVQSPQTPNQAHT. Residues 467–480 show a composition bias toward low complexity; the sequence is QLKQMAAQQQQRAK. Position 603 is an N6-acetyllysine (Lys-603). Disordered stretches follow at residues 615–662, 691–721, 968–991, 1024–1084, and 1090–1109; these read RMTP…PRAH, HGQE…MVSG, LQGM…YPLQ, AAMG…SQAY, and QDVS…PGLP. Over residues 633–649 the composition is skewed to low complexity; that stretch reads QQQQQQQQQQQQQQQQQ. Polar residues predominate over residues 1064–1084; sequence PPAQQQIPSGSFAPSSQSQAY.

It belongs to the mastermind family. As to quaternary structure, interacts through its N-terminal region with the ankyrin repeat region of the Notch proteins NOTCH1, NOTCH2, NOTCH3 and NOTCH4. Forms a DNA-binding complex with Notch proteins and RBPSUH/RBP-J kappa.

It localises to the nucleus speckle. Functionally, acts as a transcriptional coactivator for NOTCH proteins. Has been shown to amplify NOTCH-induced transcription of HES1. The sequence is that of Mastermind-like protein 3 from Homo sapiens (Human).